A 440-amino-acid polypeptide reads, in one-letter code: Lysine histidine transporter-like 6 (440 aa).

Positions 1–10 are enriched in polar residues; that stretch reads MVSSSPVSPS. Residues 1–25 are disordered; sequence MVSSSPVSPSKETDRKSGEKWTAED. Residues 1–31 are Cytoplasmic-facing; the sequence is MVSSSPVSPSKETDRKSGEKWTAEDPSRPAK. The span at 11–25 shows a compositional bias: basic and acidic residues; it reads KETDRKSGEKWTAED. A helical transmembrane segment spans residues 32–51; that stretch reads WWYSTFHTVTAMIGAGVLSL. Over 52–61 the chain is Extracellular; that stretch reads PYAMAYLGWG. Residues 62 to 82 form a helical membrane-spanning segment; that stretch reads PGTFVLAMTWGLTLNTMWQMV. The Cytoplasmic portion of the chain corresponds to 83–109; that stretch reads QLHECVPGTRFDRYIDLGRYAFGPKLG. Residues 110 to 130 traverse the membrane as a helical segment; the sequence is PWIVLPQQLIVQVGCNIVYMV. Over 131-152 the chain is Extracellular; that stretch reads TGGKCLKQFVEITCSTCTPVRQ. Residues 153-173 form a helical membrane-spanning segment; sequence SYWILGFGGVHFILSQLPNFN. Residue Ser-174 is a topological domain, cytoplasmic. Residues 175–195 form a helical membrane-spanning segment; it reads VAGVSLAAAVMSLCYSTIAWG. Topologically, residues 196–221 are extracellular; it reads GSIAHGRVPDVSYDYKATNPGDFTFR. The helical transmembrane segment at 222–242 threads the bilayer; it reads VFNALGQISFAFAGHAVALEI. Residues 243–261 lie on the Cytoplasmic side of the membrane; the sequence is QATMPSTPERPSKVPMWQG. The chain crosses the membrane as a helical span at residues 262 to 282; the sequence is VIGAYVVNAVCYFPVALICYW. Residues 283–300 lie on the Extracellular side of the membrane; that stretch reads AFGQDVDDNVLMNLQRPA. The helical transmembrane segment at 301–321 threads the bilayer; that stretch reads WLIAAANLMVVVHVIGSYQVF. At 322-353 the chain is on the cytoplasmic side; that stretch reads AMPVFDLLERMMVNKFGFKHGVVLRFFTRTIY. The next 2 membrane-spanning stretches (helical) occupy residues 354 to 374 and 375 to 395; these read VAFTLFIGVSFPFFGDLLGFF and GGFGFAPTSFFLPSIMWLIIK. The Cytoplasmic segment spans residues 396-399; that stretch reads KPRR. The chain crosses the membrane as a helical span at residues 400–420; sequence FSVTWFVNWISIIVGVFIMLA. Over 421–440 the chain is Extracellular; that stretch reads STIGGLRNIIADSSTYSFYA.

This sequence belongs to the amino acid/polyamine transporter 2 family. Amino acid/auxin permease (AAAP) (TC 2.A.18.2) subfamily.

The protein localises to the cell membrane. Its function is as follows. Amino acid transporter. This Arabidopsis thaliana (Mouse-ear cress) protein is Lysine histidine transporter-like 6.